The sequence spans 392 residues: S-adenosylmethionine synthase (392 aa).

ATP is bound at residue His20. Asp22 contributes to the Mg(2+) binding site. K(+) is bound at residue Glu48. Positions 61 and 106 each coordinate L-methionine. Residues 106–116 (QSRDIINAIEK) form a flexible loop region. ATP is bound by residues 171-173 (DSK), Asp248, 254-255 (RK), Ala271, and Lys275. Asp248 is a binding site for L-methionine. Lys279 serves as a coordination point for L-methionine.

It belongs to the AdoMet synthase family. As to quaternary structure, homotetramer; dimer of dimers. Mg(2+) is required as a cofactor. It depends on K(+) as a cofactor.

The protein resides in the cytoplasm. It carries out the reaction L-methionine + ATP + H2O = S-adenosyl-L-methionine + phosphate + diphosphate. The protein operates within amino-acid biosynthesis; S-adenosyl-L-methionine biosynthesis; S-adenosyl-L-methionine from L-methionine: step 1/1. Functionally, catalyzes the formation of S-adenosylmethionine (AdoMet) from methionine and ATP. The overall synthetic reaction is composed of two sequential steps, AdoMet formation and the subsequent tripolyphosphate hydrolysis which occurs prior to release of AdoMet from the enzyme. The sequence is that of S-adenosylmethionine synthase from Borreliella afzelii (strain PKo) (Borrelia afzelii).